We begin with the raw amino-acid sequence, 357 residues long: Anthranilate phosphoribosyltransferase (357 aa).

5-phospho-alpha-D-ribose 1-diphosphate is bound by residues Gly-91, 94–95 (GD), Thr-99, 101–104 (NIST), 119–127 (KHGNRSVSS), and Ser-131. Gly-91 is a binding site for anthranilate. Ser-103 is a Mg(2+) binding site. Asn-122 is a binding site for anthranilate. Anthranilate is bound at residue Arg-177. Mg(2+) is bound by residues Asp-235 and Glu-236.

Belongs to the anthranilate phosphoribosyltransferase family. As to quaternary structure, homodimer. Mg(2+) is required as a cofactor.

The catalysed reaction is N-(5-phospho-beta-D-ribosyl)anthranilate + diphosphate = 5-phospho-alpha-D-ribose 1-diphosphate + anthranilate. It functions in the pathway amino-acid biosynthesis; L-tryptophan biosynthesis; L-tryptophan from chorismate: step 2/5. Catalyzes the transfer of the phosphoribosyl group of 5-phosphorylribose-1-pyrophosphate (PRPP) to anthranilate to yield N-(5'-phosphoribosyl)-anthranilate (PRA). The protein is Anthranilate phosphoribosyltransferase of Shewanella baltica (strain OS185).